Reading from the N-terminus, the 458-residue chain is Protein adenylyltransferase FICD (458 aa).

Residues 1–23 (MMLIPMASVMAVTEPKWVSVWSR) lie on the Cytoplasmic side of the membrane. A helical; Signal-anchor for type II membrane protein membrane pass occupies residues 24 to 44 (FLWVTLLSMVLGSLLALLLPL). The Lumenal segment spans residues 45–458 (GAVEEQCLAV…GFKETLPVKP (414 aa)). Ser79 carries the O-AMP-serine; by autocatalysis modification. Thr80 is modified (O-AMP-threonine; by autocatalysis). TPR repeat units lie at residues 106-139 (ARAA…DPDF) and 140-173 (VDAL…SPYH). At Thr183 the chain carries O-AMP-threonine; by autocatalysis. The Inhibitory (S/T)XXXE(G/N) motif motif lies at 230–235 (TVAIEG). Glu234 is an ATP binding site. Asn275 carries an N-linked (GlcNAc...) asparagine glycan. Residues 285–420 (VTISDVLEIH…VRPFIRFIAK (136 aa)) form the Fido domain. 316–319 (VGHH) contributes to the ATP binding site. His363 is a catalytic residue. Residues 367–374 (DGNGRTSR), 399–400 (YY), and Asn407 each bind ATP. Residue Asn446 is glycosylated (N-linked (GlcNAc...) asparagine).

This sequence belongs to the fic family. Homodimer. Interacts with HD. Requires Mg(2+) as cofactor. Mn(2+) serves as cofactor. In terms of processing, auto-AMPylated in vitro; it is unclear whether auto-AMPylation is relevant in vivo. N-glycosylated; predominantly glycosylated at Asn-275. Ubiquitous.

The protein localises to the endoplasmic reticulum membrane. It catalyses the reaction L-tyrosyl-[protein] + ATP = O-(5'-adenylyl)-L-tyrosyl-[protein] + diphosphate. The catalysed reaction is 3-O-(5'-adenylyl)-L-threonyl-[protein] + H2O = L-threonyl-[protein] + AMP + H(+). It carries out the reaction L-threonyl-[protein] + ATP = 3-O-(5'-adenylyl)-L-threonyl-[protein] + diphosphate. Its activity is regulated as follows. The side chain of Glu-234 determines which of the two opposing activities (AMPylase or de-AMPylase) will take place. In response to endoplasmic reticulum stress, mediates de-AMPylase activity. Adenylyltransferase activity is inhibited by the inhibitory helix present at the N-terminus: Glu-234 binds ATP and competes with ATP-binding at Arg-374, thereby preventing adenylyltransferase activity. In unstressed cells, disengagement of Glu-234 promotes adenylyltransferase activity. Activation dissociates ATP-binding from Glu-234, allowing ordered binding of the entire ATP moiety with the alpha-phosphate in an orientation that is productive for accepting an incoming target hydroxyl side chain. Functionally, protein that can both mediate the addition of adenosine 5'-monophosphate (AMP) to specific residues of target proteins (AMPylation), and the removal of the same modification from target proteins (de-AMPylation), depending on the context. The side chain of Glu-231 determines which of the two opposing activities (AMPylase or de-AMPylase) will take place. Acts as a key regulator of the ERN1/IRE1-mediated unfolded protein response (UPR) by mediating AMPylation or de-AMPylation of HSPA5/BiP. In unstressed cells, acts as an adenylyltransferase by mediating AMPylation of HSPA5/BiP at 'Thr-518', thereby inactivating it. In response to endoplasmic reticulum stress, acts as a phosphodiesterase by mediating removal of ATP (de-AMPylation) from HSPA5/BiP at 'Thr-518', leading to restore HSPA5/BiP activity. Although it is able to AMPylate RhoA, Rac and Cdc42 Rho GTPases in vitro, Rho GTPases do not constitute physiological substrates. This Homo sapiens (Human) protein is Protein adenylyltransferase FICD.